Reading from the N-terminus, the 149-residue chain is Calmodulin (149 aa).

An N-acetylalanine modification is found at A2. EF-hand domains are found at residues 8–43 (EQIAEFKEAFSLFDKDGDGTITTKELGTVMRSLGQN), 44–79 (PTEAELQDMINEVNADGNGTIDFPEFLTMMARKMKD), 81–116 (DSEEEIREAFRVFDKDGNGYISAAELRHVMTNLGEK), and 117–149 (LTDEEVDEMIREADIDGDGQVNYEEFVQMMTAK). The Ca(2+) site is built by D21, D23, D25, T27, E32, D59, N61, T63, E68, D94, D96, N98, Y100, and E105. Residue K116 is modified to N6,N6,N6-trimethyllysine. Ca(2+)-binding residues include D130, D132, D134, Q136, and E141.

It belongs to the calmodulin family.

In terms of biological role, calmodulin acts as part of a calcium signal transduction pathway by mediating the control of a large number of enzymes, ion channels, aquaporins and other proteins through calcium-binding. Calcium-binding is required for the activation of calmodulin. Among the enzymes to be stimulated by the calmodulin-calcium complex are a number of protein kinases, such as myosin light-chain kinases and calmodulin-dependent protein kinase type II (CaMK2), and phosphatases. The sequence is that of Calmodulin from Myxine glutinosa (Atlantic hagfish).